The following is a 207-amino-acid chain: Large ribosomal subunit protein uL4 (207 aa).

The interval 44–85 is disordered; sequence MRQGTHKTKNRAEVSGGGRKPWRQKGTGRARQGSIRSPQWRG.

This sequence belongs to the universal ribosomal protein uL4 family. As to quaternary structure, part of the 50S ribosomal subunit.

In terms of biological role, one of the primary rRNA binding proteins, this protein initially binds near the 5'-end of the 23S rRNA. It is important during the early stages of 50S assembly. It makes multiple contacts with different domains of the 23S rRNA in the assembled 50S subunit and ribosome. Its function is as follows. Forms part of the polypeptide exit tunnel. This chain is Large ribosomal subunit protein uL4, found in Geobacillus thermodenitrificans (strain NG80-2).